The following is a 118-amino-acid chain: Large ribosomal subunit protein uL24c (118 aa).

It belongs to the universal ribosomal protein uL24 family. As to quaternary structure, part of the 50S ribosomal subunit.

The protein resides in the plastid. Its subcellular location is the organellar chromatophore. Functionally, one of two assembly initiator proteins, it binds directly to the 5'-end of the 23S rRNA, where it nucleates assembly of the 50S subunit. This Paulinella chromatophora protein is Large ribosomal subunit protein uL24c (rpl24).